The primary structure comprises 230 residues: Preflagellin peptidase (230 aa).

Met-1 is a topological domain (cytoplasmic). A helical membrane pass occupies residues 2–18 (IEYIIGALGLIIASVQD). Residues 19 to 23 (FRSRE) are Extracellular-facing. Residues 24–46 (IEDYIWIFLAVFGVLFAIYSSIT) form a helical membrane-spanning segment. Over 47 to 49 (LLD) the chain is Cytoplasmic. A helical membrane pass occupies residues 50 to 72 (YSILINSISGFVICFILGYMMFL). Topologically, residues 73–78 (SGIGGG) are extracellular. The chain crosses the membrane as a helical span at residues 79-89 (DGKMLIGLGAL). The Cytoplasmic portion of the chain corresponds to 90 to 110 (VPKFQMPIYTSLGTLLNLNYV). A helical transmembrane segment spans residues 111–139 (PTFPIMVFINGIFFMVFLPFVILFRNILN). The Extracellular segment spans residues 140-204 (GARPKTGKEF…EEIWVTPQIP (65 aa)). Residues 205-216 (LIIPITLSYLVT) traverse the membrane as a helical segment. Topologically, residues 217–230 (PIIGDRILDFLIPF) are cytoplasmic.

The protein belongs to the peptidase A24 family. Archaeal preflagellin peptidase subfamily.

It is found in the cell membrane. It carries out the reaction Cleaves the signal peptide of 3 to 12 amino acids from the N-terminal of preflagellin, usually at Arg-Gly-|- or Lys-Gly-|-, to release flagellin.. Cleaves the N-terminal leader peptide from preflagellins. The sequence is that of Preflagellin peptidase (flaK) from Methanococcus maripaludis (strain C6 / ATCC BAA-1332).